The chain runs to 436 residues: F-box/LRR-repeat protein 20 (436 aa).

Residues Ala-22–Ile-68 form the F-box domain. LRR repeat units lie at residues Gln-74 to Gly-100, Cys-101 to Gly-126, Cys-127 to Ser-152, Cys-153 to Trp-178, Cys-179 to Gly-204, Cys-205 to Thr-230, Cys-231 to Gly-256, Cys-257 to Arg-282, Cys-283 to Glu-308, Cys-309 to His-334, Cys-335 to Asn-363, Cys-364 to Asp-388, and Cys-389 to Ala-414. Phosphothreonine is present on Thr-417. Ser-421 carries the phosphoserine modification.

Interacts with SKP1 and CUL1. As to expression, highly expressed in brain.

It localises to the cytoplasm. Functionally, substrate-recognition component of the SCF (SKP1-CUL1-F-box protein)-type E3 ubiquitin ligase complex. Isoform 3 regulates neural transmission by binding and ubiquitinating RIMS1, a modulator of presynaptic plasticity. This is F-box/LRR-repeat protein 20 (Fbxl20) from Mus musculus (Mouse).